The chain runs to 122 residues: Large ribosomal subunit protein uL14c (122 aa).

Belongs to the universal ribosomal protein uL14 family. Part of the 50S ribosomal subunit.

It localises to the plastid. The protein resides in the chloroplast. Its function is as follows. Binds to 23S rRNA. The chain is Large ribosomal subunit protein uL14c from Jasminum nudiflorum (Winter jasmine).